Here is a 461-residue protein sequence, read N- to C-terminus: Homocitrate synthase (461 aa).

The Pyruvate carboxyltransferase domain maps to 4 to 259 (VGILDSTLRE…IEVVKLDKLQ (256 aa)). Position 12 (R12) interacts with 2-oxoglutarate. Residue E13 coordinates Mg(2+). H76, R136, and T170 together coordinate 2-oxoglutarate. H198 and H200 together coordinate Mg(2+). The active-site Proton acceptor is the H292.

It belongs to the alpha-IPM synthase/homocitrate synthase family. Homocitrate synthase LYS20/LYS21 subfamily. Mg(2+) is required as a cofactor. Requires Mn(2+) as cofactor.

The catalysed reaction is acetyl-CoA + 2-oxoglutarate + H2O = (2R)-homocitrate + CoA + H(+). The protein operates within amino-acid biosynthesis; L-lysine biosynthesis via AAA pathway; L-alpha-aminoadipate from 2-oxoglutarate: step 1/5. Catalyzes the aldol-type condensation of 2-oxoglutarate with acetyl-CoA to yield homocitrate. Carries out the first step of the alpha-aminoadipate (AAA) lysine biosynthesis pathway. The polypeptide is Homocitrate synthase (Saccharolobus islandicus (strain L.S.2.15 / Lassen #1) (Sulfolobus islandicus)).